Consider the following 877-residue polypeptide: Translation initiation factor IF-2 (877 aa).

A disordered region spans residues 48–289; that stretch reads SSFQNSAPAE…QITKRKERPL (242 aa). Positions 78-89 are enriched in basic and acidic residues; it reads RKNEKKPEENNT. The segment covering 92–101 has biased composition (basic residues); that stretch reads KSNRRRNNKR. Positions 102-116 are enriched in basic and acidic residues; sequence RSSDRARDNKERDAK. The span at 123–132 shows a compositional bias: low complexity; that stretch reads KAAALLQQFK. 2 stretches are compositionally biased toward basic and acidic residues: residues 135 to 155 and 162 to 189; these read QRAE…EYHE and KEQS…EKKV. The segment covering 277-286 has biased composition (basic residues); it reads PRKQITKRKE. Positions 378–547 constitute a tr-type G domain; it reads KRPPVVTIMG…LLQADVMELK (170 aa). Positions 387–394 are G1; that stretch reads GHVDHGKT. Residue 387–394 participates in GTP binding; the sequence is GHVDHGKT. The interval 412–416 is G2; that stretch reads GITQR. Residues 433-436 are G3; that stretch reads DTPG. GTP is bound by residues 433 to 437 and 487 to 490; these read DTPGH and NKMD. The interval 487-490 is G4; the sequence is NKMD. The G5 stretch occupies residues 523–525; sequence SAK.

It belongs to the TRAFAC class translation factor GTPase superfamily. Classic translation factor GTPase family. IF-2 subfamily.

Its subcellular location is the cytoplasm. Functionally, one of the essential components for the initiation of protein synthesis. Protects formylmethionyl-tRNA from spontaneous hydrolysis and promotes its binding to the 30S ribosomal subunits. Also involved in the hydrolysis of GTP during the formation of the 70S ribosomal complex. This chain is Translation initiation factor IF-2, found in Lactobacillus acidophilus (strain ATCC 700396 / NCK56 / N2 / NCFM).